Here is a 175-residue protein sequence, read N- to C-terminus: Adenylyl-sulfate kinase (175 aa).

12–19 (GLSGAGKT) is a binding site for ATP. Residue serine 86 is the Phosphoserine intermediate of the active site.

The protein belongs to the APS kinase family.

It carries out the reaction adenosine 5'-phosphosulfate + ATP = 3'-phosphoadenylyl sulfate + ADP + H(+). The protein operates within sulfur metabolism; hydrogen sulfide biosynthesis; sulfite from sulfate: step 2/3. In terms of biological role, catalyzes the synthesis of activated sulfate. This is Adenylyl-sulfate kinase from Synechococcus sp. (strain JA-2-3B'a(2-13)) (Cyanobacteria bacterium Yellowstone B-Prime).